Reading from the N-terminus, the 633-residue chain is Chaperone protein dnaK2 (633 aa).

Thr-196 carries the post-translational modification Phosphothreonine; by autocatalysis. Residues 600 to 633 (ATADGGPAQHAATGGPTSGGGGGDDVIDAEFDKG) form a disordered region. Residues 624–633 (DVIDAEFDKG) are compositionally biased toward acidic residues.

Belongs to the heat shock protein 70 family.

In terms of biological role, acts as a chaperone. In Streptomyces avermitilis (strain ATCC 31267 / DSM 46492 / JCM 5070 / NBRC 14893 / NCIMB 12804 / NRRL 8165 / MA-4680), this protein is Chaperone protein dnaK2 (dnaK2).